Reading from the N-terminus, the 493-residue chain is Guanosine-5'-triphosphate,3'-diphosphate pyrophosphatase (493 aa).

This sequence belongs to the GppA/Ppx family. GppA subfamily.

It catalyses the reaction guanosine 3'-diphosphate 5'-triphosphate + H2O = guanosine 3',5'-bis(diphosphate) + phosphate + H(+). The protein operates within purine metabolism; ppGpp biosynthesis; ppGpp from GTP: step 2/2. Catalyzes the conversion of pppGpp to ppGpp. Guanosine pentaphosphate (pppGpp) is a cytoplasmic signaling molecule which together with ppGpp controls the 'stringent response', an adaptive process that allows bacteria to respond to amino acid starvation, resulting in the coordinated regulation of numerous cellular activities. The polypeptide is Guanosine-5'-triphosphate,3'-diphosphate pyrophosphatase (Salmonella heidelberg (strain SL476)).